Reading from the N-terminus, the 2878-residue chain is Trinucleotide repeat-containing gene 18 protein (2878 aa).

2 disordered regions span residues 1–54 and 102–194; these read MDGR…KYMA and TQKD…SSRL. A compositionally biased stretch (polar residues) spans 119-128; that stretch reads TPSSRTPSGH. Composition is skewed to basic and acidic residues over residues 137 to 149, 158 to 169, and 179 to 194; these read SSRE…RAGR, GKKDPRAREEVS, and QEAR…SSRL. The residue at position 199 (Ser-199) is a Phosphoserine. 12 disordered regions span residues 259–289, 313–442, 487–507, 540–655, 865–1002, 1033–1104, 1127–1146, 1171–1228, 1429–1535, 1613–1668, 1694–1718, and 1737–1787; these read ARPC…AGVY, FDER…KWKP, MPRA…AAHG, SPFG…DDEC, AQEH…ALFT, ADGL…LESP, LEAQ…SEVS, LGTQ…DCDL, ELVK…DSSS, LGLS…DEDE, VPKN…RTLK, and EARS…GEQA. The segment covering 264-283 has biased composition (pro residues); the sequence is SPLPPPPPLPPKGPPAPPSS. Composition is skewed to basic and acidic residues over residues 327–337 and 350–362; these read RDVRAREREPG and RLER…EKSS. The span at 376-390 shows a compositional bias: low complexity; that stretch reads PPAARSSRSSPDARA. Residues 396-411 show a composition bias toward basic and acidic residues; sequence ELLKPEADPRPCERAP. Phosphoserine is present on Ser-540. Lys-549 is covalently cross-linked (Glycyl lysine isopeptide (Lys-Gly) (interchain with G-Cter in SUMO2)). Composition is skewed to basic and acidic residues over residues 580–589 and 865–881; these read LKRDPERPES and AQEH…KRSL. Residues 958–969 show a composition bias toward pro residues; sequence SSPPPASPPPTP. Over residues 972–993 the composition is skewed to basic and acidic residues; sequence TRKEEAPENVVEKKDLELEKET. Phosphoserine is present on residues Ser-1053 and Ser-1062. Positions 1068 to 1088 are enriched in basic and acidic residues; sequence EPPRDSPEEEQLADREVKAEV. The stretch at 1410-1442 forms a coiled coil; that stretch reads LDFRMRLAEVQRRYKEKQRELVKLQRRRDSGDR. Positions 1429–1448 are enriched in basic and acidic residues; the sequence is ELVKLQRRRDSGDRHEDAHR. A compositionally biased stretch (basic residues) spans 1449 to 1463; sequence SLARRGPGRPRKRTH. The residue at position 1469 (Ser-1469) is a Phosphoserine. A compositionally biased stretch (low complexity) spans 1478–1492; it reads SSSGKGLSSKSLLTS. The segment covering 1745 to 1775 has biased composition (acidic residues); the sequence is SSEEDSFDQDDSSEEEEEELEEEEEDEEEEG. Ser-1789 and Ser-1795 each carry phosphoserine. The segment covering 1825 to 1835 has biased composition (basic and acidic residues); that stretch reads EQKARKKEERQ. Disordered regions lie at residues 1825–2040, 2052–2080, and 2226–2681; these read EQKA…GAVS, FEAN…TPAP, and LLVP…RLPS. A compositionally biased stretch (low complexity) spans 1876–1890; the sequence is AAPGPGSRASGPSSP. Basic and acidic residues-rich tracts occupy residues 1891–1900, 1925–1936, 1966–1978, and 2024–2034; these read DKAKLVSEKG, LWTRRRSERIFL, PRKD…DRKD, and RGKEAKKENRG. Thr-2077 bears the Phosphothreonine mark. A compositionally biased stretch (basic and acidic residues) spans 2238 to 2247; that stretch reads TSKDTGEVKE. Residues 2261 to 2270 are compositionally biased toward basic residues; it reads ARGRGRKPST. Basic and acidic residues-rich tracts occupy residues 2307 to 2316 and 2409 to 2419; these read STPEPVDKRA and AKEALLLREDP. Low complexity-rich tracts occupy residues 2460-2470, 2491-2520, and 2540-2578; these read EPGPGLPLEDP, TTSS…SGSE, and RTCS…SSST. Acidic residues predominate over residues 2579 to 2591; it reads TDEDSSCSSDEEA. Residues 2631 to 2641 are compositionally biased toward pro residues; sequence TQPPPQPPPQP. Phosphoserine is present on Ser-2681. The region spanning 2727-2872 is the BAH domain; sequence EMIRIGDCAV…PTTGMIFSTD (146 aa).

In Mus musculus (Mouse), this protein is Trinucleotide repeat-containing gene 18 protein (Tnrc18).